A 621-amino-acid chain; its full sequence is Pentatricopeptide repeat-containing protein At1g12620 (621 aa).

PPR repeat units follow at residues glycine 36 to proline 70, arginine 71 to histidine 105, asparagine 106 to proline 140, aspartate 141 to proline 175, threonine 176 to proline 210, asparagine 211 to leucine 245, aspartate 246 to alanine 280, aspartate 281 to proline 315, aspartate 316 to proline 350, aspartate 351 to proline 385, asparagine 386 to alanine 420, aspartate 421 to proline 455, aspartate 456 to leucine 490, aspartate 491 to proline 525, aspartate 526 to proline 560, and asparagine 561 to valine 595.

Belongs to the PPR family. P subfamily.

This is Pentatricopeptide repeat-containing protein At1g12620 from Arabidopsis thaliana (Mouse-ear cress).